The following is a 172-amino-acid chain: 3-hydroxydecanoyl-[acyl-carrier-protein] dehydratase (172 aa).

The active site involves His-71.

This sequence belongs to the thioester dehydratase family. FabA subfamily. As to quaternary structure, homodimer.

The protein resides in the cytoplasm. The catalysed reaction is a (3R)-hydroxyacyl-[ACP] = a (2E)-enoyl-[ACP] + H2O. It catalyses the reaction (3R)-hydroxydecanoyl-[ACP] = (2E)-decenoyl-[ACP] + H2O. The enzyme catalyses (2E)-decenoyl-[ACP] = (3Z)-decenoyl-[ACP]. It functions in the pathway lipid metabolism; fatty acid biosynthesis. Its function is as follows. Necessary for the introduction of cis unsaturation into fatty acids. Catalyzes the dehydration of (3R)-3-hydroxydecanoyl-ACP to E-(2)-decenoyl-ACP and then its isomerization to Z-(3)-decenoyl-ACP. Can catalyze the dehydratase reaction for beta-hydroxyacyl-ACPs with saturated chain lengths up to 16:0, being most active on intermediate chain length. This Aliivibrio fischeri (strain ATCC 700601 / ES114) (Vibrio fischeri) protein is 3-hydroxydecanoyl-[acyl-carrier-protein] dehydratase.